The following is a 277-amino-acid chain: uncharacterized protein (277 aa).

It belongs to the BtpA family.

Its subcellular location is the mitochondrion. This is an uncharacterized protein from Caenorhabditis elegans.